Reading from the N-terminus, the 548-residue chain is Membrane protein insertase YidC (548 aa).

A helical membrane pass occupies residues 6-26 (NLLVIALLFVSFMIWQAWEQD). The interval 28-56 (NPQPQTQQTTQTTTTAAGSAADQGVPASG) is disordered. Low complexity predominate over residues 29–42 (PQPQTQQTTQTTTT). 4 helical membrane passes run 350 to 370 (FVGNWGFSIIIITFIVRGIMY), 424 to 444 (FPLIIQMPIFLALYYMLMGSI), 458 to 478 (LSAQDPYYILPILMGVTMFFI), and 499 to 519 (PVIFTVFFLWFPSGLVLYYIV).

Belongs to the OXA1/ALB3/YidC family. Type 1 subfamily. As to quaternary structure, interacts with the Sec translocase complex via SecD. Specifically interacts with transmembrane segments of nascent integral membrane proteins during membrane integration.

The protein resides in the cell inner membrane. Functionally, required for the insertion and/or proper folding and/or complex formation of integral membrane proteins into the membrane. Involved in integration of membrane proteins that insert both dependently and independently of the Sec translocase complex, as well as at least some lipoproteins. Aids folding of multispanning membrane proteins. The protein is Membrane protein insertase YidC of Salmonella choleraesuis (strain SC-B67).